A 764-amino-acid polypeptide reads, in one-letter code: Bifunctional type I diterpene synthase tndC (764 aa).

Positions 1 to 324 (MEYRYSTVVD…CPRYHPWSSY (324 aa)) are terpene cyclase. Residues Asp-92 and Asp-96 each contribute to the Mg(2+) site. The DDXXD 1 motif lies at 92 to 96 (DDVTD). Residues 224-232 (NDLYSWQKE) carry the NSE/DTE motif. The segment at 325-761 (NERQLDWMKN…FQLRLILEML (437 aa)) is prenyltransferase. The interval 377–403 (AVNGNGASHTSSIKGSTGGNGVTHSPV) is disordered. Residues 381–391 (NGASHTSSIKG) show a composition bias toward polar residues. The isopentenyl diphosphate site is built by Lys-484, Arg-487, and His-516. Mg(2+)-binding residues include Asp-523 and Asp-527. The short motif at 523–527 (DDLED) is the DDXXD 2 element. Arg-532 is a binding site for dimethylallyl diphosphate. Residue Arg-533 participates in isopentenyl diphosphate binding. Dimethylallyl diphosphate-binding residues include Lys-610, Thr-611, Gln-646, Asn-653, Lys-663, and Lys-673.

The protein in the N-terminal section; belongs to the terpene synthase family. This sequence in the C-terminal section; belongs to the FPP/GGPP synthase family.

It catalyses the reaction isopentenyl diphosphate + (2E,6E)-farnesyl diphosphate = (2E,6E,10E)-geranylgeranyl diphosphate + diphosphate. The catalysed reaction is (2E,6E,10E)-geranylgeranyl diphosphate = talarodiene + diphosphate. The protein operates within secondary metabolite biosynthesis; terpenoid biosynthesis. In terms of biological role, bifunctional type I diterpene synthase; part of the gene cluster that mediates the biosynthesis of talaronoid C, a fusicoccane diterpenoid with an unprecedented tricyclic 5/8/6 ring system. The first step in the pathway is performed by the fusicoccadiene synthase tndC that possesses both prenyl transferase and terpene cyclase activity, converting isopentenyl diphosphate and dimethylallyl diphosphate into geranylgeranyl diphosphate (GGDP) and further converting GGDP into talarodiene, a precursor for talaronoid C. The remaining enzymes from the cluster include the cytochrome P450 monooxygenase tndB, the aldehyde reductase tndE and the alcohol dehydrogenase tndF that are involved in the conversion of talarodiene into talaronoid C. The chain is Bifunctional type I diterpene synthase tndC from Aspergillus flavipes.